Reading from the N-terminus, the 113-residue chain is Nucleoid-associated protein Syncc9605_0027 (113 aa).

Belongs to the YbaB/EbfC family. Homodimer.

The protein localises to the cytoplasm. The protein resides in the nucleoid. Binds to DNA and alters its conformation. May be involved in regulation of gene expression, nucleoid organization and DNA protection. This is Nucleoid-associated protein Syncc9605_0027 from Synechococcus sp. (strain CC9605).